The chain runs to 290 residues: tRNA (adenine(58)-N(1))-methyltransferase catalytic subunit TRMT61A (290 aa).

Serine 2 is modified (N-acetylserine). Substrate regions lie at residues leucine 20–histidine 22, glutamine 35–valine 42, glycine 64–tryptophan 65, glutamine 85–serine 89, and serine 110–valine 117. S-adenosyl-L-methionine-binding positions include leucine 87, serine 114–serine 116, glutamate 135, arginine 140, aspartate 163–valine 164, and aspartate 181. 2 substrate regions span residues leucine 180–proline 183 and serine 205–glutamine 212. Serine 264 carries the phosphoserine modification. Threonine 279 serves as a coordination point for substrate.

Belongs to the class I-like SAM-binding methyltransferase superfamily. TRM61 family. Heterotetramer; composed of two copies of TRMT6 and two copies of TRMT61A.

Its subcellular location is the nucleus. The catalysed reaction is adenosine(58) in tRNA + S-adenosyl-L-methionine = N(1)-methyladenosine(58) in tRNA + S-adenosyl-L-homocysteine + H(+). It catalyses the reaction an adenosine in mRNA + S-adenosyl-L-methionine = an N(1)-methyladenosine in mRNA + S-adenosyl-L-homocysteine + H(+). Its function is as follows. Catalytic subunit of tRNA (adenine-N(1)-)-methyltransferase, which catalyzes the formation of N(1)-methyladenine at position 58 (m1A58) in initiator methionyl-tRNA. Catalytic subunit of mRNA N(1)-methyltransferase complex, which mediates methylation of adenosine residues at the N(1) position of a small subset of mRNAs: N(1) methylation takes place in tRNA T-loop-like structures of mRNAs and is only present at low stoichiometries. The chain is tRNA (adenine(58)-N(1))-methyltransferase catalytic subunit TRMT61A (Trmt61a) from Mus musculus (Mouse).